A 283-amino-acid chain; its full sequence is Pantothenate synthetase (283 aa).

30–37 (MGALHEGH) is an ATP binding site. The Proton donor role is filled by H37. Residue Q61 coordinates (R)-pantoate. Q61 serves as a coordination point for beta-alanine. 147–150 (GEKD) provides a ligand contact to ATP. Q153 is a (R)-pantoate binding site. Residues I176 and 184 to 187 (VSSR) each bind ATP.

The protein belongs to the pantothenate synthetase family. In terms of assembly, homodimer.

The protein localises to the cytoplasm. The catalysed reaction is (R)-pantoate + beta-alanine + ATP = (R)-pantothenate + AMP + diphosphate + H(+). It functions in the pathway cofactor biosynthesis; (R)-pantothenate biosynthesis; (R)-pantothenate from (R)-pantoate and beta-alanine: step 1/1. Catalyzes the condensation of pantoate with beta-alanine in an ATP-dependent reaction via a pantoyl-adenylate intermediate. The protein is Pantothenate synthetase of Pelodictyon phaeoclathratiforme (strain DSM 5477 / BU-1).